Here is a 300-residue protein sequence, read N- to C-terminus: UDP-N-acetylenolpyruvoylglucosamine reductase (300 aa).

The region spanning 28 to 193 is the FAD-binding PCMH-type domain; sequence KTGGPADWLA…LDATFALKLG (166 aa). Residue Arg172 is part of the active site. Ser222 serves as the catalytic Proton donor. Glu292 is an active-site residue.

It belongs to the MurB family. Requires FAD as cofactor.

It is found in the cytoplasm. It catalyses the reaction UDP-N-acetyl-alpha-D-muramate + NADP(+) = UDP-N-acetyl-3-O-(1-carboxyvinyl)-alpha-D-glucosamine + NADPH + H(+). It functions in the pathway cell wall biogenesis; peptidoglycan biosynthesis. Cell wall formation. The polypeptide is UDP-N-acetylenolpyruvoylglucosamine reductase (Limosilactobacillus fermentum (strain NBRC 3956 / LMG 18251) (Lactobacillus fermentum)).